We begin with the raw amino-acid sequence, 980 residues long: Envelope glycoprotein B (980 aa).

Polar residues predominate over residues 1–14 (MSSGCRSVGGSTWG). 2 disordered regions span residues 1–20 (MSSG…RGDG) and 88–118 (TTPS…TETP). Positions 1 to 86 (MSSGCRSVGG…LFGSCVVRAV (86 aa)) are cleaved as a signal peptide. Over 87 to 849 (PTTPSPPTST…SGIASFLNNP (763 aa)) the chain is Virion surface. The span at 96-118 (TPTSMSTHSHGTVDPTLLPTETP) shows a compositional bias: low complexity. 5 disulfides stabilise this stretch: Cys140–Cys647, Cys157–Cys603, Cys231–Cys296, Cys389–Cys437, and Cys668–Cys708. Asn165 carries N-linked (GlcNAc...) asparagine; by host glycosylation. The interval 197-203 (VWKGYSH) is involved in fusion and/or binding to host membrane. A glycan (N-linked (GlcNAc...) asparagine; by host) is linked at Asn275. The involved in fusion and/or binding to host membrane stretch occupies residues 282-290 (GWMPWRHYT). N-linked (GlcNAc...) asparagine; by host glycosylation is found at Asn380, Asn423, Asn497, Asn514, Asn515, and Asn560. Residues 505 to 516 (LLNPNANNNNNT) are compositionally biased toward low complexity. Positions 505–535 (LLNPNANNNNNTTRRRRSLLSVPEPQPTQDG) are disordered. N-linked (GlcNAc...) asparagine; by host glycosylation is found at Asn727 and Asn749. 2 hydrophobic membrane proximal region regions span residues 794–847 (IDSV…SFLN) and 823–843 (AVGT…SGIA). A helical membrane pass occupies residues 850–870 (FGGLAIGLLVIAGLVAAFFAY). Residues 871-980 (RYVMQIRSNP…NDTMENEKMV (110 aa)) lie on the Intravirion side of the membrane. The Golgi targeting signature appears at 925–928 (YMSM). N-linked (GlcNAc...) asparagine; by host glycosylation occurs at Asn952. Positions 965–968 (YTRL) match the Internalization motif motif. A glycan (N-linked (GlcNAc...) asparagine; by host) is linked at Asn971.

The protein belongs to the herpesviridae glycoprotein B family. As to quaternary structure, homotrimer; disulfide-linked. Binds to heparan sulfate proteoglycans. Interacts with gH/gL heterodimer. In terms of processing, a proteolytic cleavage by host furin generates two subunits that remain linked by disulfide bonds.

Its subcellular location is the virion membrane. The protein localises to the host cell membrane. It localises to the host endosome membrane. It is found in the host Golgi apparatus membrane. Its function is as follows. Envelope glycoprotein that forms spikes at the surface of virion envelope. Essential for the initial attachment to heparan sulfate moieties of the host cell surface proteoglycans. Involved in fusion of viral and cellular membranes leading to virus entry into the host cell. Following initial binding to its host receptors, membrane fusion is mediated by the fusion machinery composed at least of gB and the heterodimer gH/gL. May be involved in the fusion between the virion envelope and the outer nuclear membrane during virion egress. This chain is Envelope glycoprotein B, found in Equine herpesvirus 1 (strain HVS25A) (EHV-1).